Here is a 499-residue protein sequence, read N- to C-terminus: Laccase (499 aa).

Plastocyanin-like domains are found at residues 2 to 127 (VGPV…FVVY) and 139 to 281 (VDND…ILRY). Asn-51 and Asn-54 each carry an N-linked (GlcNAc...) asparagine glycan. The Cu cation site is built by His-64, His-66, His-109, and His-111. 2 cysteine pairs are disulfide-bonded: Cys-85–Cys-488 and Cys-117–Cys-205. 3'-nitrotyrosine is present on Tyr-196. Asn-208, Asn-217, Asn-292, and Asn-333 each carry an N-linked (GlcNAc...) asparagine glycan. The Plastocyanin-like 3 domain maps to 348 to 470 (SVPVLLQILS…GGFAVVQAED (123 aa)). The residue at position 372 (Tyr-372) is a 3'-nitrotyrosine. Asn-377 is a glycosylation site (N-linked (GlcNAc...) asparagine). Cu cation is bound by residues His-395, His-398, and His-400. N-linked (GlcNAc...) asparagine glycans are attached at residues Asn-416 and Asn-436. Positions 452, 453, 454, and 458 each coordinate Cu cation.

It belongs to the multicopper oxidase family. Requires Cu cation as cofactor.

It localises to the secreted. It catalyses the reaction 4 hydroquinone + O2 = 4 benzosemiquinone + 2 H2O. Its function is as follows. Lignin degradation and detoxification of lignin-derived products. This chain is Laccase, found in Trametes maxima (White-rot fungus).